Here is a 425-residue protein sequence, read N- to C-terminus: Adenylosuccinate synthetase (425 aa).

GTP-binding positions include 12–18 and 40–42; these read GDEGKGK and GHT. D13 acts as the Proton acceptor in catalysis. Mg(2+)-binding residues include D13 and G40. Residues 13–16, 38–41, T130, R144, Q225, T240, and R304 each bind IMP; these read DEGK and NAGH. H41 (proton donor) is an active-site residue. A substrate-binding site is contributed by 300-306; sequence ATTGRPR. GTP is bound by residues R306, 332 to 334, and 414 to 416; these read KLD and SVG.

The protein belongs to the adenylosuccinate synthetase family. As to quaternary structure, homodimer. Mg(2+) serves as cofactor.

The protein resides in the cytoplasm. It carries out the reaction IMP + L-aspartate + GTP = N(6)-(1,2-dicarboxyethyl)-AMP + GDP + phosphate + 2 H(+). The protein operates within purine metabolism; AMP biosynthesis via de novo pathway; AMP from IMP: step 1/2. In terms of biological role, plays an important role in the de novo pathway of purine nucleotide biosynthesis. Catalyzes the first committed step in the biosynthesis of AMP from IMP. This is Adenylosuccinate synthetase from Desulfovibrio desulfuricans (strain ATCC 27774 / DSM 6949 / MB).